Here is a 332-residue protein sequence, read N- to C-terminus: Malate dehydrogenase 1, cytoplasmic (332 aa).

Residues 16–17 and Asp43 each bind NAD(+); that span reads QI. Met56 bears the Methionine sulfoxide mark. NAD(+) is bound at residue Gly90. Residue Met97 is modified to Methionine sulfoxide. Arg99 contacts oxaloacetate. Residue Gln113 coordinates NAD(+). A Glycyl lysine isopeptide (Lys-Gly) (interchain with G-Cter in ubiquitin) cross-link involves residue Lys119. Asn132 is a binding site for NAD(+). Oxaloacetate is bound by residues Asn132, Arg163, His188, and Ser243. Residue His188 is the Proton acceptor of the active site.

It belongs to the LDH/MDH superfamily. MDH type 2 family. As to quaternary structure, forms a homodimer. Forms a disulfide-linked homodimer upon oxidation. Interacts with 14-3-3-like proteins GRF1 GRF3 and GRF8. Interacts with TRX1, TRX2, TRX3, TRX4 and TRX5. In terms of tissue distribution, expressed in rosette leaves.

The protein localises to the cytoplasm. The enzyme catalyses (S)-malate + NAD(+) = oxaloacetate + NADH + H(+). With respect to regulation, decreased activity upon treatment with hydrogen peroxide. Functionally, catalyzes a reversible NAD-dependent dehydrogenase reaction involved in central metabolism and redox homeostasis between organellar compartments. The polypeptide is Malate dehydrogenase 1, cytoplasmic (MDH1) (Arabidopsis thaliana (Mouse-ear cress)).